Here is a 464-residue protein sequence, read N- to C-terminus: Glutamate--tRNA ligase (464 aa).

The short motif at P10–G20 is the 'HIGH' region element. A compositionally biased stretch (basic and acidic residues) spans Q113–A130. The tract at residues Q113–P142 is disordered. A 'KMSKS' region motif is present at residues K242 to R246. Residue K245 coordinates ATP.

It belongs to the class-I aminoacyl-tRNA synthetase family. Glutamate--tRNA ligase type 1 subfamily. Monomer.

The protein resides in the cytoplasm. It carries out the reaction tRNA(Glu) + L-glutamate + ATP = L-glutamyl-tRNA(Glu) + AMP + diphosphate. Its function is as follows. Catalyzes the attachment of glutamate to tRNA(Glu) in a two-step reaction: glutamate is first activated by ATP to form Glu-AMP and then transferred to the acceptor end of tRNA(Glu). The protein is Glutamate--tRNA ligase of Dechloromonas aromatica (strain RCB).